The primary structure comprises 388 residues: Dauer abnormal formation protein 25 (388 aa).

3 ANK repeats span residues 40 to 69 (SGMS…DVND), 74 to 103 (TLYT…RMYL), and 107 to 137 (IGKT…DVIE). C321, C324, C333, C336, C341, C345, H353, and C357 together coordinate Zn(2+). The MYND-type zinc-finger motif lies at 321 to 357 (CSVCGHPGAKKRCTQCKLAYCSQECQKFDWPIHKKVC).

Expressed in many ciliated sensory neurons.

It localises to the cell projection. The protein localises to the cilium. May be involved in the trafficking and dendritic transport of signaling proteins, such as the receptor-type guanylate cyclases gcy-12 and daf-11, to the cilia. In ciliated sensory neurons, required for the calcium flux to the cytoplasm in response to onset and removal of a nitric oxide (NO) stimulus and is thereby required for the behavioral avoidance response to NO-producing organisms like P.aeruginosa. The polypeptide is Dauer abnormal formation protein 25 (daf-25) (Caenorhabditis elegans).